Here is a 137-residue protein sequence, read N- to C-terminus: Outer membrane protein assembly factor BamE (137 aa).

The N-terminal stretch at 1–18 (MQVKTLLGATFLALSLAS) is a signal peptide. Cys-19 is lipidated: N-palmitoyl cysteine. The S-diacylglycerol cysteine moiety is linked to residue Cys-19.

Belongs to the BamE family. In terms of assembly, part of the Bam complex.

The protein resides in the cell outer membrane. Functionally, part of the outer membrane protein assembly complex, which is involved in assembly and insertion of beta-barrel proteins into the outer membrane. The protein is Outer membrane protein assembly factor BamE of Haemophilus influenzae (strain ATCC 51907 / DSM 11121 / KW20 / Rd).